The sequence spans 192 residues: uncharacterized protein (192 aa).

The interval 168–192 is disordered; it reads PLWRKSEAGSRKARTSNSGGPTKRA. Polar residues predominate over residues 182 to 192; that stretch reads TSNSGGPTKRA.

To A.xylinum IS1268 ORFA.

This is an uncharacterized protein from Sinorhizobium fredii (strain NBRC 101917 / NGR234).